The chain runs to 239 residues: ATP-dependent dethiobiotin synthetase BioD (239 aa).

15-20 (EIGKTF) is a binding site for ATP. T19 provides a ligand contact to Mg(2+). K40 is a catalytic residue. ATP contacts are provided by residues D57, 118–121 (EGAG), and 178–179 (NH). Mg(2+) contacts are provided by D57 and E118.

Belongs to the dethiobiotin synthetase family. Homodimer. It depends on Mg(2+) as a cofactor.

Its subcellular location is the cytoplasm. It carries out the reaction (7R,8S)-7,8-diammoniononanoate + CO2 + ATP = (4R,5S)-dethiobiotin + ADP + phosphate + 3 H(+). It functions in the pathway cofactor biosynthesis; biotin biosynthesis; biotin from 7,8-diaminononanoate: step 1/2. Its function is as follows. Catalyzes a mechanistically unusual reaction, the ATP-dependent insertion of CO2 between the N7 and N8 nitrogen atoms of 7,8-diaminopelargonic acid (DAPA, also called 7,8-diammoniononanoate) to form a ureido ring. The protein is ATP-dependent dethiobiotin synthetase BioD of Burkholderia lata (strain ATCC 17760 / DSM 23089 / LMG 22485 / NCIMB 9086 / R18194 / 383).